The primary structure comprises 501 residues: Lysine--tRNA ligase (501 aa).

The Mg(2+) site is built by Asp411 and Glu418.

Belongs to the class-II aminoacyl-tRNA synthetase family. Homodimer. Mg(2+) serves as cofactor.

It localises to the cytoplasm. The enzyme catalyses tRNA(Lys) + L-lysine + ATP = L-lysyl-tRNA(Lys) + AMP + diphosphate. The sequence is that of Lysine--tRNA ligase from Mycolicibacterium gilvum (strain PYR-GCK) (Mycobacterium gilvum (strain PYR-GCK)).